The primary structure comprises 387 residues: 3-ketoacyl-CoA thiolase (387 aa).

Residue C91 is the Acyl-thioester intermediate of the active site. Active-site proton acceptor residues include H343 and C373.

The protein belongs to the thiolase-like superfamily. Thiolase family. In terms of assembly, heterotetramer of two alpha chains (FadB) and two beta chains (FadA).

Its subcellular location is the cytoplasm. It catalyses the reaction an acyl-CoA + acetyl-CoA = a 3-oxoacyl-CoA + CoA. It participates in lipid metabolism; fatty acid beta-oxidation. Its function is as follows. Catalyzes the final step of fatty acid oxidation in which acetyl-CoA is released and the CoA ester of a fatty acid two carbons shorter is formed. This is 3-ketoacyl-CoA thiolase from Salmonella paratyphi A (strain ATCC 9150 / SARB42).